Reading from the N-terminus, the 290-residue chain is MDIVTPILTPFTKEGKIDVEKLKAHAKFLIDNGIDLLFVNGTTGLGPALSKEEKLTTLKTIYDVTNKVIFQVGSLNINDVIDLVKASKDFDIVGIASYPPFYFPRLPEKFLLKYFTTIANYSPHSLYIYNYPLATGYDISAKIVYQMKDLITGLKDTNQDLSHSLEYKILMPNLKVYNGSDSLVFYSLTSLDGSVTAASNYLPHVMKKMKEHITSGQVSKAIELQKLINKALDISRKYGQLSAIYYLVKEFLGYDVGYPRGPIFPLEEDEVKALLSEIQPVKKEIERAVS.

Residues 42–43 (TT), 129–131 (YNY), and 155–157 (KDT) contribute to the substrate site. The active-site Schiff-base intermediate with substrate is K155.

It belongs to the DapA family. KDPG aldolase subfamily. As to quaternary structure, homotetramer; dimer of dimers.

The enzyme catalyses 2-dehydro-3-deoxy-6-phospho-D-gluconate = D-glyceraldehyde 3-phosphate + pyruvate. It carries out the reaction 2-dehydro-3-deoxy-6-phospho-D-galactonate = D-glyceraldehyde 3-phosphate + pyruvate. It participates in carbohydrate acid metabolism; 2-dehydro-3-deoxy-D-gluconate degradation; D-glyceraldehyde 3-phosphate and pyruvate from 2-dehydro-3-deoxy-D-gluconate: step 2/2. In terms of biological role, involved in the degradation of glucose and galactose via the Entner-Doudoroff pathway. Catalyzes the reversible cleavage of 2-keto-3-deoxy-6-phosphogluconate (KDPG) and 2-keto-3-deoxygluconate (KDG) forming pyruvate and glyceraldehyde 3-phosphate or glyceraldehyde, respectively. It is also able to catalyze the reversible cleavage of 2-keto-3-deoxy-6-phosphogalactonate (KDPGal) and 2-keto-3-deoxygalactonate (KDGal). This Sulfurisphaera tokodaii (strain DSM 16993 / JCM 10545 / NBRC 100140 / 7) (Sulfolobus tokodaii) protein is 2-dehydro-3-deoxy-phosphogluconate/2-dehydro-3-deoxy-6-phosphogalactonate aldolase (kdgA).